The primary structure comprises 215 residues: Pyridoxine/pyridoxamine 5'-phosphate oxidase (215 aa).

Substrate contacts are provided by residues 9–12 and lysine 69; that span reads RRDY. Residues 64 to 69, 79 to 80, lysine 86, and glutamine 108 each bind FMN; these read RILLLK and FT. Substrate contacts are provided by tyrosine 126, arginine 130, and serine 134. FMN-binding positions include 143–144 and tryptophan 188; that span reads QS. 194 to 196 contacts substrate; that stretch reads RLH. Arginine 198 contributes to the FMN binding site.

The protein belongs to the pyridoxamine 5'-phosphate oxidase family. Homodimer. FMN is required as a cofactor.

The enzyme catalyses pyridoxamine 5'-phosphate + O2 + H2O = pyridoxal 5'-phosphate + H2O2 + NH4(+). It catalyses the reaction pyridoxine 5'-phosphate + O2 = pyridoxal 5'-phosphate + H2O2. It functions in the pathway cofactor metabolism; pyridoxal 5'-phosphate salvage; pyridoxal 5'-phosphate from pyridoxamine 5'-phosphate: step 1/1. Its pathway is cofactor metabolism; pyridoxal 5'-phosphate salvage; pyridoxal 5'-phosphate from pyridoxine 5'-phosphate: step 1/1. In terms of biological role, catalyzes the oxidation of either pyridoxine 5'-phosphate (PNP) or pyridoxamine 5'-phosphate (PMP) into pyridoxal 5'-phosphate (PLP). The protein is Pyridoxine/pyridoxamine 5'-phosphate oxidase of Pseudomonas fluorescens (strain SBW25).